The chain runs to 159 residues: uncharacterized protein (159 aa).

This is an uncharacterized protein from Schizosaccharomyces pombe (strain 972 / ATCC 24843) (Fission yeast).